Reading from the N-terminus, the 145-residue chain is U1 small nuclear ribonucleoprotein C (145 aa).

The Matrin-type zinc finger occupies 4–36 (YYCDYCDTYLTHDSPSVRKTHCTGRKHRDNVKF). A disordered region spans residues 67 to 91 (FAGGPGGAPPKPAGVSIPPPNMGAP). The span at 73–91 (GAPPKPAGVSIPPPNMGAP) shows a compositional bias: pro residues.

Belongs to the U1 small nuclear ribonucleoprotein C family. As to quaternary structure, U1 snRNP is composed of the 7 core Sm proteins B/B', D1, D2, D3, E, F and G that assemble in a heptameric protein ring on the Sm site of the small nuclear RNA to form the core snRNP, and at least 3 U1 snRNP-specific proteins U1-70K, U1-A and U1-C. U1-C interacts with U1 snRNA and the 5' splice-site region of the pre-mRNA.

It localises to the nucleus. In terms of biological role, component of the spliceosomal U1 snRNP, which is essential for recognition of the pre-mRNA 5' splice-site and the subsequent assembly of the spliceosome. U1-C is directly involved in initial 5' splice-site recognition for both constitutive and regulated alternative splicing. The interaction with the 5' splice-site seems to precede base-pairing between the pre-mRNA and the U1 snRNA. Stimulates commitment or early (E) complex formation by stabilizing the base pairing of the 5' end of the U1 snRNA and the 5' splice-site region. Regulates alternative splicing of a distinct group of target genes. The protein is U1 small nuclear ribonucleoprotein C of Drosophila melanogaster (Fruit fly).